A 260-amino-acid polypeptide reads, in one-letter code: Malonyl-[acyl-carrier protein] O-methyltransferase (260 aa).

The protein belongs to the methyltransferase superfamily.

The enzyme catalyses malonyl-[ACP] + S-adenosyl-L-methionine = malonyl-[ACP] methyl ester + S-adenosyl-L-homocysteine. It functions in the pathway cofactor biosynthesis; biotin biosynthesis. In terms of biological role, converts the free carboxyl group of a malonyl-thioester to its methyl ester by transfer of a methyl group from S-adenosyl-L-methionine (SAM). It allows to synthesize pimeloyl-ACP via the fatty acid synthetic pathway. This Chlorobium phaeovibrioides (strain DSM 265 / 1930) (Prosthecochloris vibrioformis (strain DSM 265)) protein is Malonyl-[acyl-carrier protein] O-methyltransferase.